Here is a 205-residue protein sequence, read N- to C-terminus: Recombination protein RecR (205 aa).

Residues 60 to 75 (CKVCHNISDTETCQIC) form a C4-type zinc finger. Residues 83 to 178 (SMVCVVENIR…KLSVLARGVS (96 aa)) enclose the Toprim domain.

The protein belongs to the RecR family.

In terms of biological role, may play a role in DNA repair. It seems to be involved in an RecBC-independent recombinational process of DNA repair. It may act with RecF and RecO. This chain is Recombination protein RecR, found in Bacteroides fragilis (strain ATCC 25285 / DSM 2151 / CCUG 4856 / JCM 11019 / LMG 10263 / NCTC 9343 / Onslow / VPI 2553 / EN-2).